A 122-amino-acid chain; its full sequence is Large ribosomal subunit protein uL14 (122 aa).

It belongs to the universal ribosomal protein uL14 family. Part of the 50S ribosomal subunit. Forms a cluster with proteins L3 and L19. In the 70S ribosome, L14 and L19 interact and together make contacts with the 16S rRNA in bridges B5 and B8.

Its function is as follows. Binds to 23S rRNA. Forms part of two intersubunit bridges in the 70S ribosome. This Mycoplasmopsis pulmonis (strain UAB CTIP) (Mycoplasma pulmonis) protein is Large ribosomal subunit protein uL14.